Consider the following 233-residue polypeptide: Bcl-2-like protein 1 (233 aa).

Residues 4-24 (SNRELVVDFLSYKLSQKGYSW) carry the BH4 motif. The segment at 27–73 (FSDVEENRTEAPEETEPERETPSAINGNPSWHLADSPAVNGATGHSS) is disordered. S49 is modified (phosphoserine; by PLK3). Residue S62 is modified to Phosphoserine; by CDK1. A BH3 motif is present at residues 86–100 (VKQALREAGDEFELR). The BH1 motif lies at 129–148 (ELFRDGVNWGRIVAFFSFGG). A BH2 motif is present at residues 180–195 (PWIQENGGWDTFVDLY). A helical transmembrane segment spans residues 210-226 (FNRWFLTGMTVAGVVLL).

Belongs to the Bcl-2 family. As to quaternary structure, homodimer. Interacts with BCL2L11. Interacts with BAD. Interacts with PGAM5. Interacts with HEBP2. Interacts with p53/TP53 and BBC3; interaction with BBC3 disrupts the interaction with p53/TP53. Interacts with ATP5F1A and ATP5F1B; the interactions mediate the association of isoform Bcl-X(L) with the mitochondrial membrane ATP synthase F(1)F(0) ATP synthase. Interacts with VDAC1. Interacts with BCL2L11 (via BH3). Interacts with RNF183. Interacts with GIMAP3/IAN4 and GIMAP5/IAN5. Interacts with GIMAP5 and HSPA8/HSC70; the interaction between HSPA8 and BCL2L1 is impaired in the absence of GIMAP5. Interacts with isoform 4 of CLU; this interaction releases and activates BAX and promotes cell death. Forms heterodimers with BAX, BAK or BCL2; heterodimerization with BAX does not seem to be required for anti-apoptotic activity. Interacts with isoform 1 of SIVA1; the interaction inhibits the anti-apoptotic activity. Interacts with IKZF3. Interacts with RTL10/BOP. Interacts with DNM1L and CLTA; DNM1L and BCL2L1 isoform BCL-X(L) may form a complex in synaptic vesicles that also contains clathrin and MFF. Interacts (via the loop between motifs BH4 and BH3) with NLRP1 (via LRR repeats), but not with NLRP2, NLRP3, NLRP4, PYCARD, nor MEFV. Interacts with BECN1. Proteolytically cleaved by caspases during apoptosis. The cleaved protein, lacking the BH4 motif, has pro-apoptotic activity. In terms of processing, phosphorylated on Ser-62 by CDK1. This phosphorylation is partial in normal mitotic cells, but complete in G2-arrested cells upon DNA-damage, thus promoting subsequent apoptosis probably by triggering caspases-mediated proteolysis. Phosphorylated by PLK3, leading to regulate the G2 checkpoint and progression to cytokinesis during mitosis. Phosphorylation at Ser-49 appears during the S phase and G2, disappears rapidly in early mitosis during prometaphase, metaphase and early anaphase, and re-appears during telophase and cytokinesis. Post-translationally, ubiquitinated by RNF183 during prolonged ER stress, leading to degradation by the proteosome. Expressed in most tissues. Bcl-X(beta) is specifically expressed in cerebellum, heart, and thymus. In the ovary, the predominant form is Bcl-X(L), with a small but detectable level of Bcl-X(S).

The protein localises to the mitochondrion inner membrane. Its subcellular location is the mitochondrion outer membrane. The protein resides in the mitochondrion matrix. It is found in the cytoplasmic vesicle. It localises to the secretory vesicle. The protein localises to the synaptic vesicle membrane. Its subcellular location is the cytoplasm. The protein resides in the cytosol. It is found in the cytoskeleton. It localises to the microtubule organizing center. The protein localises to the centrosome. Its subcellular location is the nucleus membrane. Its function is as follows. Potent inhibitor of cell death. Inhibits activation of caspases. Appears to regulate cell death by blocking the voltage-dependent anion channel (VDAC) by binding to it and preventing the release of the caspase activator, CYC1, from the mitochondrial membrane. Also acts as a regulator of G2 checkpoint and progression to cytokinesis during mitosis. Isoform Bcl-X(L) also regulates presynaptic plasticity, including neurotransmitter release and recovery, number of axonal mitochondria as well as size and number of synaptic vesicle clusters. During synaptic stimulation, increases ATP availability from mitochondria through regulation of mitochondrial membrane ATP synthase F(1)F(0) activity and regulates endocytic vesicle retrieval in hippocampal neurons through association with DMN1L and stimulation of its GTPase activity in synaptic vesicles. May attenuate inflammation impairing NLRP1-inflammasome activation, hence CASP1 activation and IL1B release. In terms of biological role, isoform Bcl-X(S) promotes apoptosis. This Rattus norvegicus (Rat) protein is Bcl-2-like protein 1 (Bcl2l1).